Here is a 371-residue protein sequence, read N- to C-terminus: Cytochrome b (371 aa).

4 helical membrane passes run F25–I45, W69–I90, W105–L125, and F170–I190. Heme b-binding residues include H75 and H89. The heme b site is built by H174 and H188. H193 contacts a ubiquinone. A run of 4 helical transmembrane segments spans residues Y218–S238, L280–H300, F312–T332, and F339–P358.

This sequence belongs to the cytochrome b family. As to quaternary structure, the cytochrome bc1 complex contains 3 respiratory subunits (MT-CYB, CYC1 and UQCRFS1), 2 core proteins (UQCRC1 and UQCRC2) and probably 6 low-molecular weight proteins. Requires heme b as cofactor.

It is found in the mitochondrion inner membrane. Component of the ubiquinol-cytochrome c reductase complex (complex III or cytochrome b-c1 complex) that is part of the mitochondrial respiratory chain. The b-c1 complex mediates electron transfer from ubiquinol to cytochrome c. Contributes to the generation of a proton gradient across the mitochondrial membrane that is then used for ATP synthesis. This chain is Cytochrome b (MT-CYB), found in Elapognathus coronatus (Western crowned snake).